The sequence spans 490 residues: Ketol-acid reductoisomerase (NADP(+)) (490 aa).

In terms of domain architecture, KARI N-terminal Rossmann spans 18–208 (AKCRFMDSSE…GGHKAGVLMS (191 aa)). NADP(+) is bound by residues 45 to 48 (CGAQ), Arg-68, Arg-76, Ser-78, and 108 to 110 (DKQ). His-132 is a catalytic residue. Gly-158 lines the NADP(+) pocket. KARI C-terminal knotted domains are found at residues 209–344 (SFIA…KTPA) and 345–486 (GDVE…MADM). 4 residues coordinate Mg(2+): Asp-217, Glu-221, Glu-389, and Glu-393. Ser-414 serves as a coordination point for substrate.

Belongs to the ketol-acid reductoisomerase family. Requires Mg(2+) as cofactor.

The catalysed reaction is (2R)-2,3-dihydroxy-3-methylbutanoate + NADP(+) = (2S)-2-acetolactate + NADPH + H(+). The enzyme catalyses (2R,3R)-2,3-dihydroxy-3-methylpentanoate + NADP(+) = (S)-2-ethyl-2-hydroxy-3-oxobutanoate + NADPH + H(+). Its pathway is amino-acid biosynthesis; L-isoleucine biosynthesis; L-isoleucine from 2-oxobutanoate: step 2/4. The protein operates within amino-acid biosynthesis; L-valine biosynthesis; L-valine from pyruvate: step 2/4. Its function is as follows. Involved in the biosynthesis of branched-chain amino acids (BCAA). Catalyzes an alkyl-migration followed by a ketol-acid reduction of (S)-2-acetolactate (S2AL) to yield (R)-2,3-dihydroxy-isovalerate. In the isomerase reaction, S2AL is rearranged via a Mg-dependent methyl migration to produce 3-hydroxy-3-methyl-2-ketobutyrate (HMKB). In the reductase reaction, this 2-ketoacid undergoes a metal-dependent reduction by NADPH to yield (R)-2,3-dihydroxy-isovalerate. The protein is Ketol-acid reductoisomerase (NADP(+)) of Marinomonas sp. (strain MWYL1).